We begin with the raw amino-acid sequence, 481 residues long: UDP-glucose 6-dehydrogenase 1 (481 aa).

NAD(+) contacts are provided by residues 8–13, Asp-33, Arg-38, 86–90, 127–128, and Glu-162; these read GAGYVG, VNTPT, and ST. Substrate is bound by residues 158–162, 217–224, and 257–270; these read EFLAE, KLAANAFL, and RIGA…VGFG. Cys-273 acts as the Nucleophile in catalysis. Residue 273-276 participates in NAD(+) binding; it reads CFQK. Residue 335 to 336 coordinates substrate; that stretch reads FK. Arg-343 lines the NAD(+) pocket. Ser-394 is subject to Phosphoserine. Arg-448 contacts substrate.

This sequence belongs to the UDP-glucose/GDP-mannose dehydrogenase family.

The catalysed reaction is UDP-alpha-D-glucose + 2 NAD(+) + H2O = UDP-alpha-D-glucuronate + 2 NADH + 3 H(+). The protein operates within nucleotide-sugar biosynthesis; UDP-alpha-D-glucuronate biosynthesis; UDP-alpha-D-glucuronate from UDP-alpha-D-glucose: step 1/1. In terms of biological role, involved in the biosynthesis of UDP-glucuronic acid (UDP-GlcA), providing nucleotide sugars for cell-wall polymers. This chain is UDP-glucose 6-dehydrogenase 1 (UGD1), found in Oryza sativa subsp. japonica (Rice).